The chain runs to 407 residues: Probable acyl-CoA dehydrogenase FadE2 (407 aa).

It belongs to the acyl-CoA dehydrogenase family. The cofactor is FAD.

It carries out the reaction a 2,3-saturated acyl-CoA + A = a 2,3-dehydroacyl-CoA + AH2. In Mycobacterium tuberculosis (strain ATCC 25618 / H37Rv), this protein is Probable acyl-CoA dehydrogenase FadE2.